The sequence spans 177 residues: Inner membrane-spanning protein YciB (177 aa).

A run of 5 helical transmembrane segments spans residues 22–42 (IFIA…IHWI), 50–70 (ISLF…FFHN), 76–96 (WKIT…QFFT), 121–141 (FIWS…AYYF), and 149–169 (FKVF…SIYI).

This sequence belongs to the YciB family.

It is found in the cell inner membrane. In terms of biological role, plays a role in cell envelope biogenesis, maintenance of cell envelope integrity and membrane homeostasis. In Buchnera aphidicola subsp. Acyrthosiphon pisum (strain APS) (Acyrthosiphon pisum symbiotic bacterium), this protein is Inner membrane-spanning protein YciB.